Consider the following 119-residue polypeptide: ATP-dependent Clp protease adapter protein ClpS (119 aa).

Positions 1–33 (MATRIPKTPSTPPAQKPAGDDGDSVVLERRPQK) are disordered.

This sequence belongs to the ClpS family. In terms of assembly, binds to the N-terminal domain of the chaperone ClpA.

Involved in the modulation of the specificity of the ClpAP-mediated ATP-dependent protein degradation. The polypeptide is ATP-dependent Clp protease adapter protein ClpS (Variovorax paradoxus (strain S110)).